The following is a 100-amino-acid chain: Mercuric transport protein (100 aa).

A run of 2 helical transmembrane segments spans residues 19 to 39 (LAVV…VLLA) and 43 to 63 (LAGL…AVLL). The Hg(2+) site is built by C31 and C32. Residues C82 and C83 each coordinate Hg(2+).

The protein localises to the cell membrane. Functionally, involved in mercuric transport. Passes a mercury ion from the MerP protein to the mercuric reductase MerA. This is Mercuric transport protein (merT) from Streptomyces lividans.